The primary structure comprises 566 residues: E3 ubiquitin-protein ligase RNF220 (566 aa).

A Glycyl lysine isopeptide (Lys-Gly) (interchain with G-Cter in SUMO2) cross-link involves residue K277. Residues 277–297 (KREGESPTASPHSSATDDLHH) are disordered. At S390 the chain carries Phosphoserine. Residues 485–513 (EDSAVTTFEALKARVRELERQLSRGDRYK) are a coiled coil. Residues 514 to 522 (CLICMDSYS) are required for targeting to the cytoplasm. The segment at 514–553 (CLICMDSYSMPLTSIQCWHVHCEECWLRTLGAKKLCPQCN) adopts an RING-type zinc-finger fold.

In terms of assembly, interacts with SIN3B. Interacts with CTNNB1 (via Armadillo repeats 2-8). Interacts with USP7 (via MATH domain). Auto-ubiquitinated; leads to proteasomal degradation. Ubiquitously expressed. Abundant in brain and spinal cord, particularly in the cerebellum and cerebral cortex. In fetal tissues expressed in the cerebellum, spinal cord and cortex.

Its subcellular location is the cytoplasm. It is found in the nucleus. It catalyses the reaction S-ubiquitinyl-[E2 ubiquitin-conjugating enzyme]-L-cysteine + [acceptor protein]-L-lysine = [E2 ubiquitin-conjugating enzyme]-L-cysteine + N(6)-ubiquitinyl-[acceptor protein]-L-lysine.. The protein operates within protein modification; protein ubiquitination. E3 ubiquitin-protein ligase that promotes the ubiquitination and proteasomal degradation of SIN3B. Independently of its E3 ligase activity, acts as a CTNNB1 stabilizer through USP7-mediated deubiquitination of CTNNB1 promoting Wnt signaling. Plays a critical role in the regulation of nuclear lamina. The chain is E3 ubiquitin-protein ligase RNF220 (RNF220) from Homo sapiens (Human).